The following is a 352-amino-acid chain: Probable cytosolic iron-sulfur protein assembly protein CIAO1 homolog (352 aa).

WD repeat units follow at residues 14–53 (GHDD…PSEQ), 63–102 (CHTR…WEQV), 107–146 (GHEN…EFEC), 152–191 (GHSQ…WGCA), 200–240 (GHES…TSTP), 268–306 (HHRR…LTQP), and 319–352 (AHGA…WWLR).

Belongs to the WD repeat CIA1 family.

Functionally, essential component of the cytosolic iron-sulfur (Fe/S) protein assembly machinery. Required for the maturation of extramitochondrial Fe/S proteins. This Chlamydomonas reinhardtii (Chlamydomonas smithii) protein is Probable cytosolic iron-sulfur protein assembly protein CIAO1 homolog.